A 53-amino-acid polypeptide reads, in one-letter code: Serine rich endogenous peptide 3 (53 aa).

A signal peptide spans 1-26 (MTKKGPLNLRLLLLLLVVLLPSCSNC). The SCOOP motif signature appears at 37–53 (SSEWRRKMITVWSKSSY). The SxS motif essential for MIK2 binding motif lies at 49–51 (SKS).

Belongs to the serine rich endogenous peptide (SCOOP) phytocytokine family. In terms of assembly, interacts with MIK2 (via extracellular leucine-rich repeat domain); this interaction triggers the formation of complex between MIK2 and the BAK1/SERK3 and SERK4 coreceptors, and subsequent BAK1 activation by phosphorylation.

Its subcellular location is the cell membrane. The protein resides in the secreted. It localises to the extracellular space. It is found in the apoplast. Functionally, brassicaceae-specific phytocytokine (plant endogenous peptide released into the apoplast) perceived by MIK2 in a BAK1/SERK3 and SERK4 coreceptors-dependent manner, that modulates various physiological and antimicrobial processes including growth prevention and reactive oxygen species (ROS) response regulation. The sequence is that of Serine rich endogenous peptide 3 from Arabidopsis thaliana (Mouse-ear cress).